Reading from the N-terminus, the 330-residue chain is Putative 4-hydroxythreonine-4-phosphate dehydrogenase (330 aa).

Residues His-169, His-213, and His-263 each contribute to the a divalent metal cation site.

The protein belongs to the PdxA family. In terms of assembly, homodimer. Zn(2+) serves as cofactor. Requires Mg(2+) as cofactor. Co(2+) is required as a cofactor.

The protein resides in the cytoplasm. It catalyses the reaction 4-(phosphooxy)-L-threonine + NAD(+) = 3-amino-2-oxopropyl phosphate + CO2 + NADH. It participates in cofactor biosynthesis; pyridoxine 5'-phosphate biosynthesis; pyridoxine 5'-phosphate from D-erythrose 4-phosphate: step 4/5. Functionally, catalyzes the NAD(P)-dependent oxidation of 4-(phosphooxy)-L-threonine (HTP) into 2-amino-3-oxo-4-(phosphooxy)butyric acid which spontaneously decarboxylates to form 3-amino-2-oxopropyl phosphate (AHAP). The protein is Putative 4-hydroxythreonine-4-phosphate dehydrogenase of Novosphingobium aromaticivorans (Sphingomonas aromaticivorans).